We begin with the raw amino-acid sequence, 486 residues long: Nucleolar GTP-binding protein 2 (486 aa).

Residues 1–20 (MGTGKKEKSRRIREGDTKDG) form a disordered region. Phosphoserine is present on residues serine 60, serine 85, and serine 155. The 162-residue stretch at 212–373 (WNELYKVIDS…LIDCPGIVPP (162 aa)) folds into the CP-type G domain. Residues 322–329 (GYPNTGKS) and 366–370 (DCPGI) contribute to the GTP site.

Belongs to the TRAFAC class YlqF/YawG GTPase family. NOG2 subfamily.

It is found in the nucleus. The protein resides in the nucleolus. Its function is as follows. GTPase that associates with pre-60S ribosomal subunits in the nucleolus and is required for their nuclear export and maturation. The sequence is that of Nucleolar GTP-binding protein 2 (NOG2) from Saccharomyces cerevisiae (strain ATCC 204508 / S288c) (Baker's yeast).